Consider the following 396-residue polypeptide: UPF0164 protein TP_0858 (396 aa).

An N-terminal signal peptide occupies residues 1 to 28 (MGTMIRHTFTHRCGALLCALALGSSTMA).

The protein belongs to the UPF0164 family.

The polypeptide is UPF0164 protein TP_0858 (Treponema pallidum (strain Nichols)).